The following is a 90-amino-acid chain: MPEVFIGKKPLTNYVMAVVMQFMQGANEVVIKARGRNISRAVDVAERVRKRFLAGQVDVGDIKIDSEEVVDPATGQKRTVSTIEIKLVKK.

The residue at position 8 (K8) is an N6-acetyllysine.

The protein belongs to the histone-like Alba family. Acetylated. Acetylation at Lys-8 decreases DNA-binding affinity.

The protein localises to the cytoplasm. Its subcellular location is the chromosome. Binds double-stranded DNA tightly but without sequence specificity. Involved in DNA compaction. This chain is DNA/RNA-binding protein Alba, found in Nanoarchaeum equitans (strain Kin4-M).